Here is an 83-residue protein sequence, read N- to C-terminus: Small ribosomal subunit protein bS20 (83 aa).

Residues 60–83 (ASKGLIHKNKASRDKSRLAAKLAN) form a disordered region.

It belongs to the bacterial ribosomal protein bS20 family.

Functionally, binds directly to 16S ribosomal RNA. This is Small ribosomal subunit protein bS20 from Streptococcus thermophilus (strain CNRZ 1066).